Here is a 456-residue protein sequence, read N- to C-terminus: Kynurenine 3-monooxygenase (456 aa).

It belongs to the aromatic-ring hydroxylase family. KMO subfamily. FAD serves as cofactor.

It catalyses the reaction L-kynurenine + NADPH + O2 + H(+) = 3-hydroxy-L-kynurenine + NADP(+) + H2O. Its pathway is cofactor biosynthesis; NAD(+) biosynthesis; quinolinate from L-kynurenine: step 1/3. In terms of biological role, catalyzes the hydroxylation of L-kynurenine (L-Kyn) to form 3-hydroxy-L-kynurenine (L-3OHKyn). Required for synthesis of quinolinic acid. This Xanthomonas campestris pv. campestris (strain B100) protein is Kynurenine 3-monooxygenase.